The primary structure comprises 174 residues: Probable phenolic acid decarboxylase (174 aa).

This sequence belongs to the PadC family.

Catalyzes the decarboxylation of phenolic acids. This Vibrio cholerae serotype O1 (strain ATCC 39315 / El Tor Inaba N16961) protein is Probable phenolic acid decarboxylase (padC).